Consider the following 348-residue polypeptide: Cyclic AMP-dependent transcription factor ATF-4 (348 aa).

Lys53 is covalently cross-linked (Glycyl lysine isopeptide (Lys-Gly) (interchain with G-Cter in SUMO2)). Disordered regions lie at residues 151 to 174 and 187 to 265; these read QGAPFTFFQPLPPSPGTLSSTPDH and PEGD…GEKM. Phosphoserine is present on residues Ser211, Ser215, Ser220, Ser227, and Ser231. The BetaTrCP degron motif signature appears at 211–220; sequence SDNDSGICMS. Residues 221–241 are compositionally biased toward polar residues; it reads PDSSLGSPQDSPSTSRGSPNK. Pro232 carries the 4-hydroxyproline modification. A phosphoserine mark is found at Ser242 and Ser245. The span at 242 to 253 shows a compositional bias: low complexity; the sequence is SLLSPGALSGSS. Residues Lys256, Lys264, and Lys269 each participate in a glycyl lysine isopeptide (Lys-Gly) (interchain with G-Cter in SUMO2) cross-link. The 64-residue stretch at 275–338 folds into the bZIP domain; that stretch reads LDKKLKKMEQ…QYLKDQIEEV (64 aa). The segment at 277–297 is basic motif; the sequence is KKLKKMEQNKTAATRYRQKKR. The tract at residues 302 to 338 is interaction with GABBR1; it reads ALTGECKELEKKNEALKEKADSLAKEIQYLKDQIEEV. A leucine-zipper region spans residues 303–331; that stretch reads LTGECKELEKKNEALKEKADSLAKEIQYL. Lys308 carries the N6-acetyllysine modification.

The protein belongs to the bZIP family. Binds DNA as a homodimer and as a heterodimer. Heterodimer; heterodimerizes with CEBPB. Heterodimer; heterodimerizes with DDIT3/CHOP. Interacts with CEP290 (via an N-terminal region). Interacts with NEK6, DAPK2 (isoform 2) and ZIPK/DAPK3. Interacts (via its leucine zipper domain) with GABBR1 and GABBR2 (via their C-termini). Forms a heterodimer with TXLNG in osteoblasts. Interacts (via its DNA binding domain) with FOXO1 (C-terminal half); the interaction occurs in osteoblasts and regulates glucose homeostasis through suppression of beta-cell proliferation and a decrease in insulin production. Interacts with SATB2; the interaction results in enhanced DNA binding and transactivation by these transcription factors. Interacts with ABRAXAS2. Interacts with TRIB3, inhibiting the transactivation activity of ATF4. Interacts with DISC1; which inhibits ATF4 transcription factor activity by disrupting ATF4 dimerization and DNA-binding. Interacts with EP300/p300; EP300/p300 stabilizes ATF4 and increases its transcriptional activity independently of its catalytic activity by preventing its ubiquitination. Post-translationally, ubiquitinated by SCF(BTRC) in response to mTORC1 signal, followed by proteasomal degradation and leading to down-regulate expression of SIRT4. Interaction with EP300/p300 inhibits ubiquitination by SCF(BTRC). Phosphorylation at Ser-242 by RPS6KA3/RSK2 in osteoblasts enhances transactivation activity and promotes osteoblast differentiation. Phosphorylated on the betaTrCP degron motif at Ser-215, followed by phosphorylation at Ser-220, Ser-227, Ser-231 and Ser-245, promoting interaction with BTRC and ubiquitination. Phosphorylation is promoted by mTORC1. Phosphorylation at Ser-211 by CK2 decreases its stability. Phosphorylated by NEK6. In terms of processing, hydroxylated by PHD3, leading to decreased protein stability.

Its subcellular location is the nucleus. It is found in the nucleus speckle. The protein resides in the cytoplasm. The protein localises to the cell membrane. It localises to the cytoskeleton. Its subcellular location is the microtubule organizing center. It is found in the centrosome. Transcription factor that binds the cAMP response element (CRE) (consensus: 5'-GTGACGT[AC][AG]-3') and displays two biological functions, as regulator of metabolic and redox processes under normal cellular conditions, and as master transcription factor during integrated stress response (ISR). Binds to asymmetric CRE's as a heterodimer and to palindromic CRE's as a homodimer. Core effector of the ISR, which is required for adaptation to various stress such as endoplasmic reticulum (ER) stress, amino acid starvation, mitochondrial stress or oxidative stress. During ISR, ATF4 translation is induced via an alternative ribosome translation re-initiation mechanism in response to EIF2S1/eIF-2-alpha phosphorylation, and stress-induced ATF4 acts as a master transcription factor of stress-responsive genes in order to promote cell recovery. Promotes the transcription of genes linked to amino acid sufficiency and resistance to oxidative stress to protect cells against metabolic consequences of ER oxidation. Activates the transcription of NLRP1, possibly in concert with other factors in response to ER stress. Activates the transcription of asparagine synthetase (ASNS) in response to amino acid deprivation or ER stress. However, when associated with DDIT3/CHOP, the transcriptional activation of the ASNS gene is inhibited in response to amino acid deprivation. Together with DDIT3/CHOP, mediates programmed cell death by promoting the expression of genes involved in cellular amino acid metabolic processes, mRNA translation and the terminal unfolded protein response (terminal UPR), a cellular response that elicits programmed cell death when ER stress is prolonged and unresolved. Activates the expression of COX7A2L/SCAF1 downstream of the EIF2AK3/PERK-mediated unfolded protein response, thereby promoting formation of respiratory chain supercomplexes and increasing mitochondrial oxidative phosphorylation. Together with DDIT3/CHOP, activates the transcription of the IRS-regulator TRIB3 and promotes ER stress-induced neuronal cell death by regulating the expression of BBC3/PUMA in response to ER stress. May cooperate with the UPR transcriptional regulator QRICH1 to regulate ER protein homeostasis which is critical for cell viability in response to ER stress. In the absence of stress, ATF4 translation is at low levels and it is required for normal metabolic processes such as embryonic lens formation, fetal liver hematopoiesis, bone development and synaptic plasticity. Acts as a regulator of osteoblast differentiation in response to phosphorylation by RPS6KA3/RSK2: phosphorylation in osteoblasts enhances transactivation activity and promotes expression of osteoblast-specific genes and post-transcriptionally regulates the synthesis of Type I collagen, the main constituent of the bone matrix. Cooperates with FOXO1 in osteoblasts to regulate glucose homeostasis through suppression of beta-cell production and decrease in insulin production. Activates transcription of SIRT4. Regulates the circadian expression of the core clock component PER2 and the serotonin transporter SLC6A4. Binds in a circadian time-dependent manner to the cAMP response elements (CRE) in the SLC6A4 and PER2 promoters and periodically activates the transcription of these genes. Mainly acts as a transcriptional activator in cellular stress adaptation, but it can also act as a transcriptional repressor: acts as a regulator of synaptic plasticity by repressing transcription, thereby inhibiting induction and maintenance of long-term memory. Regulates synaptic functions via interaction with DISC1 in neurons, which inhibits ATF4 transcription factor activity by disrupting ATF4 dimerization and DNA-binding. The polypeptide is Cyclic AMP-dependent transcription factor ATF-4 (Bos taurus (Bovine)).